We begin with the raw amino-acid sequence, 826 residues long: Ubiquitin carboxyl-terminal hydrolase 16 (826 aa).

Residues M1–M23 are disordered. The UBP-type zinc-finger motif lies at P22 to A141. Residues C24, H26, C48, C51, C73, C76, C81, H89, H93, H102, C115, and C118 each coordinate Zn(2+). Residue K139 forms a Glycyl lysine isopeptide (Lys-Gly) (interchain with G-Cter in SUMO2) linkage. The interval T145 to I184 is disordered. Positions P148–A180 are enriched in basic and acidic residues. Phosphoserine is present on S188. In terms of domain architecture, USP spans K195–I825. The active-site Nucleophile is the C204. The segment covering Q392 to M407 has biased composition (basic and acidic residues). Disordered stretches follow at residues Q392–Q456 and A526–P553. Positions E408–D419 are enriched in acidic residues. Phosphoserine is present on S414. Over residues H436 to Q456 the composition is skewed to basic residues. Residues A526 to V537 show a composition bias toward basic and acidic residues. Positions S539–S551 are enriched in polar residues. The active-site Proton acceptor is the H760.

It belongs to the peptidase C19 family. USP16 subfamily. As to quaternary structure, homotetramer. Associates with late pre-40S ribosomes. Interacts with CEP78; promoting deubiquitination of tektins. Phosphorylated at the onset of mitosis and dephosphorylated during the metaphase/anaphase transition. Phosphorylation by AURKB enhances the deubiquitinase activity.

It localises to the nucleus. It catalyses the reaction Thiol-dependent hydrolysis of ester, thioester, amide, peptide and isopeptide bonds formed by the C-terminal Gly of ubiquitin (a 76-residue protein attached to proteins as an intracellular targeting signal).. Functionally, specifically deubiquitinates 'Lys-120' of histone H2A (H2AK119Ub), a specific tag for epigenetic transcriptional repression, thereby acting as a coactivator. Deubiquitination of histone H2A is a prerequisite for subsequent phosphorylation at 'Ser-11' of histone H3 (H3S10ph), and is required for chromosome segregation when cells enter into mitosis. In resting B- and T-lymphocytes, phosphorylation by AURKB leads to enhance its activity, thereby maintaining transcription in resting lymphocytes. Regulates Hox gene expression via histone H2A deubiquitination. Prefers nucleosomal substrates. Does not deubiquitinate histone H2B. Also deubiquitinates non-histone proteins, such as ribosomal protein RPS27A: deubiquitination of monoubiquitinated RPS27A promotes maturation of the 40S ribosomal subunit. Also mediates deubiquitination of tektin proteins (TEKT1, TEKT2, TEK3, TEKT4 and TEKT5), promoting their stability. The sequence is that of Ubiquitin carboxyl-terminal hydrolase 16 (Usp16) from Rattus norvegicus (Rat).